The following is a 284-amino-acid chain: D-tagatose-1,6-bisphosphate aldolase subunit GatY (284 aa).

Catalysis depends on D82, which acts as the Proton donor. Zn(2+) contacts are provided by H83 and H180. Position 181 (G181) interacts with dihydroxyacetone phosphate. H208 is a Zn(2+) binding site. Residues 209–211 and 230–233 each bind dihydroxyacetone phosphate; these read GAS and NVAT.

It belongs to the class II fructose-bisphosphate aldolase family. TagBP aldolase GatY subfamily. As to quaternary structure, forms a complex with GatZ. The cofactor is Zn(2+).

It carries out the reaction D-tagatofuranose 1,6-bisphosphate = D-glyceraldehyde 3-phosphate + dihydroxyacetone phosphate. Its pathway is carbohydrate metabolism; D-tagatose 6-phosphate degradation; D-glyceraldehyde 3-phosphate and glycerone phosphate from D-tagatose 6-phosphate: step 2/2. Its function is as follows. Catalytic subunit of the tagatose-1,6-bisphosphate aldolase GatYZ, which catalyzes the reversible aldol condensation of dihydroxyacetone phosphate (DHAP or glycerone-phosphate) with glyceraldehyde 3-phosphate (G3P) to produce tagatose 1,6-bisphosphate (TBP). Requires GatZ subunit for full activity and stability. Is involved in the catabolism of galactitol. In Salmonella choleraesuis (strain SC-B67), this protein is D-tagatose-1,6-bisphosphate aldolase subunit GatY.